The chain runs to 1480 residues: DNA polymerase zeta catalytic subunit (1480 aa).

Positions 403–488 are disordered; it reads DRSKFPKSPL…GDTRKAGKRL (86 aa). Residues 411–427 are compositionally biased toward polar residues; that stretch reads PLNSSQEVTIHSSQDRQ. Residues 457-468 show a composition bias toward basic and acidic residues; sequence TKREIEFCRDLP. The segment covering 470 to 479 has biased composition (polar residues); the sequence is RPTSSEPNQG. Zn(2+)-binding residues include C1381, C1384, C1400, and C1403. The CysA-type zinc-finger motif lies at 1381–1403; sequence CSSCLKNNIEIIPDKINSLCSDC. [4Fe-4S] cluster is bound by residues C1432, C1435, C1446, and C1451. A CysB motif motif is present at residues 1432 to 1451; that stretch reads CRGCSKLSSSDPVLCKSNSC.

Belongs to the DNA polymerase type-B family. In terms of assembly, forms DNA polymerase zeta with rev7. It depends on [4Fe-4S] cluster as a cofactor.

It is found in the mitochondrion. The protein localises to the nucleus. The enzyme catalyses DNA(n) + a 2'-deoxyribonucleoside 5'-triphosphate = DNA(n+1) + diphosphate. Nonessential DNA polymerase. Required for DNA damage induced mutagenesis. Involved in DNA repair, mitochondrial DNA repair and translesion synthesis. Has a role in the bypass of abasic (AP) sites. The polypeptide is DNA polymerase zeta catalytic subunit (rev3) (Schizosaccharomyces pombe (strain 972 / ATCC 24843) (Fission yeast)).